The primary structure comprises 263 residues: Hydroxyethylthiazole kinase (263 aa).

Position 41 (methionine 41) interacts with substrate. ATP is bound by residues lysine 117 and serine 163. Glycine 190 is a binding site for substrate.

The protein belongs to the Thz kinase family. The cofactor is Mg(2+).

It catalyses the reaction 5-(2-hydroxyethyl)-4-methylthiazole + ATP = 4-methyl-5-(2-phosphooxyethyl)-thiazole + ADP + H(+). It functions in the pathway cofactor biosynthesis; thiamine diphosphate biosynthesis; 4-methyl-5-(2-phosphoethyl)-thiazole from 5-(2-hydroxyethyl)-4-methylthiazole: step 1/1. Catalyzes the phosphorylation of the hydroxyl group of 4-methyl-5-beta-hydroxyethylthiazole (THZ). The polypeptide is Hydroxyethylthiazole kinase (Thermoanaerobacter sp. (strain X514)).